The sequence spans 233 residues: Endonuclease V (233 aa).

Mg(2+) is bound by residues D48 and D116.

This sequence belongs to the endonuclease V family. Mg(2+) serves as cofactor.

The protein resides in the cytoplasm. It catalyses the reaction Endonucleolytic cleavage at apurinic or apyrimidinic sites to products with a 5'-phosphate.. Its function is as follows. DNA repair enzyme involved in the repair of deaminated bases. Selectively cleaves double-stranded DNA at the second phosphodiester bond 3' to a deoxyinosine leaving behind the intact lesion on the nicked DNA. This is Endonuclease V from Streptomyces coelicolor (strain ATCC BAA-471 / A3(2) / M145).